The chain runs to 559 residues: Spermidine/putrescine import ATP-binding protein PotA (559 aa).

Residues 7–448 (IEIEGLNKTF…PKTEWIANFI (442 aa)) form the ABC transporter domain. 40 to 47 (GPSGCGKT) lines the ATP pocket. The insert stretch occupies residues 108-317 (WTKLDEIPKL…EAFEKRYLSR (210 aa)).

This sequence belongs to the ABC transporter superfamily. Spermidine/putrescine importer (TC 3.A.1.11.1) family. The complex is composed of two ATP-binding proteins (PotA), two transmembrane proteins (PotB and PotC) and a solute-binding protein (PotD).

The protein localises to the cell membrane. The enzyme catalyses ATP + H2O + polyamine-[polyamine-binding protein]Side 1 = ADP + phosphate + polyamineSide 2 + [polyamine-binding protein]Side 1.. In terms of biological role, part of the ABC transporter complex PotABCD involved in spermidine/putrescine import. Responsible for energy coupling to the transport system. In Mycoplasma genitalium (strain ATCC 33530 / DSM 19775 / NCTC 10195 / G37) (Mycoplasmoides genitalium), this protein is Spermidine/putrescine import ATP-binding protein PotA.